A 255-amino-acid chain; its full sequence is tRNA pseudouridine synthase A (255 aa).

Asp52 serves as the catalytic Nucleophile. Tyr111 serves as a coordination point for substrate.

It belongs to the tRNA pseudouridine synthase TruA family. Homodimer.

It carries out the reaction uridine(38/39/40) in tRNA = pseudouridine(38/39/40) in tRNA. In terms of biological role, formation of pseudouridine at positions 38, 39 and 40 in the anticodon stem and loop of transfer RNAs. The chain is tRNA pseudouridine synthase A from Nitrobacter winogradskyi (strain ATCC 25391 / DSM 10237 / CIP 104748 / NCIMB 11846 / Nb-255).